We begin with the raw amino-acid sequence, 328 residues long: Dihydroorotate dehydrogenase (quinone), mitochondrial (328 aa).

The chain crosses the membrane as a helical span at residues 21–38 (AHGLSIAGLKTGLVTGSA). FMN contacts are provided by residues 61-65 (AGYDK) and T85. K65 serves as a coordination point for substrate. Residue 110–114 (NRLGF) coordinates substrate. FMN-binding residues include N139 and N170. 170-175 (NISSPN) provides a ligand contact to substrate. Residue S173 is the Nucleophile of the active site. Positions 215 and 243 each coordinate FMN. 244-245 (NT) is a binding site for substrate. Positions 266 and 295 each coordinate FMN.

This sequence belongs to the dihydroorotate dehydrogenase family. Type 2 subfamily. FMN serves as cofactor.

Its subcellular location is the mitochondrion inner membrane. It catalyses the reaction (S)-dihydroorotate + a quinone = orotate + a quinol. The protein operates within pyrimidine metabolism; UMP biosynthesis via de novo pathway; orotate from (S)-dihydroorotate (quinone route): step 1/1. Functionally, catalyzes the conversion of dihydroorotate to orotate with quinone as electron acceptor. The chain is Dihydroorotate dehydrogenase (quinone), mitochondrial (URA1) from Cyclocybe aegerita (Black poplar mushroom).